Reading from the N-terminus, the 42-residue chain is Conodipine-M beta chain (42 aa).

As to quaternary structure, heterodimer of an alpha and a beta chains; probably disulfide-linked. As to expression, expressed by the venom duct.

It is found in the secreted. Its function is as follows. Heterodimer: conodipine-M catalyzes the calcium-dependent hydrolysis of the 2-acyl groups in 3-sn-phosphoglycerides. This activity may be supported by the alpha chain. Conodipine-M inhibits the binding of isradipine (a ligand specific for L-type calcium channel) to L-type calcium channels. This chain is Conodipine-M beta chain, found in Conus magus (Magical cone).